The following is a 190-amino-acid chain: DNA dC-&gt;dU-editing enzyme APOBEC-3C (190 aa).

The region spanning 29–138 (DRNETWLCFT…PCYQEGLRSL (110 aa)) is the CMP/dCMP-type deaminase domain. The segment at 40–86 (EGIKRRSVVSWKTGVFRNQVDSETHCHAERCFLSWFCDDILSPNTKY) is (Microbial infection) Required for interaction with human foamy virus protein Bet. Residue H66 coordinates Zn(2+). The Proton donor role is filled by E68. Positions 97 and 100 each coordinate Zn(2+).

It belongs to the cytidine and deoxycytidylate deaminase family. In terms of assembly, homodimer. Interacts with TRIB3. Interacts with AGO2. As to quaternary structure, (Microbial infection) Interacts with human foamy virus protein Bet; this interaction does not induce APOBEC3C degradation but prevents its dimerization and incorporation into the virion by binding of Bet close to or within the APOBEC3C dimerization site. (Microbial infection) Interacts with HIV-1 Vif. The cofactor is Zn(2+). As to expression, expressed in spleen, testes, peripherical blood lymphocytes, heart, thymus, prostate and ovary.

The protein localises to the nucleus. It is found in the cytoplasm. It catalyses the reaction a 2'-deoxycytidine in single-stranded DNA + H2O + H(+) = a 2'-deoxyuridine in single-stranded DNA + NH4(+). With respect to regulation, (Microbial infection) Antiviral activity is neutralized by the HIV-1 virion infectivity factor (Vif), that prevents its incorporation into progeny HIV-1 virions by both inhibiting its translation and/or by inducing its ubiquitination and subsequent degradation by the 26S proteasome. DNA deaminase (cytidine deaminase) which acts as an inhibitor of retrovirus replication and retrotransposon mobility via deaminase-dependent and -independent mechanisms. After the penetration of retroviral nucleocapsids into target cells of infection and the initiation of reverse transcription, it can induce the conversion of cytosine to uracil in the minus-sense single-strand viral DNA, leading to G-to-A hypermutations in the subsequent plus-strand viral DNA. The resultant detrimental levels of mutations in the proviral genome, along with a deamination-independent mechanism that works prior to the proviral integration, together exert efficient antiretroviral effects in infected target cells. Selectively targets single-stranded DNA and does not deaminate double-stranded DNA or single- or double-stranded RNA. Exhibits antiviral activity against simian immunodeficiency virus (SIV), hepatitis B virus (HBV), herpes simplex virus 1 (HHV-1) and Epstein-Barr virus (EBV) and may inhibit the mobility of LTR and non-LTR retrotransposons. May also play a role in the epigenetic regulation of gene expression through the process of active DNA demethylation. This Homo sapiens (Human) protein is DNA dC-&gt;dU-editing enzyme APOBEC-3C (APOBEC3C).